The primary structure comprises 303 residues: D-alanine--D-alanine ligase (303 aa).

The ATP-grasp domain occupies 103 to 293; the sequence is KTLFIKGGIP…FAQLCEKILE (191 aa). Residue 130–179 participates in ATP binding; that stretch reads PYVIKPSRQGSSIGIEFVYDIKELDQAIKKSTQYDHVVLAEALITGKELT. Positions 247, 260, and 262 each coordinate Mg(2+).

This sequence belongs to the D-alanine--D-alanine ligase family. It depends on Mg(2+) as a cofactor. Mn(2+) serves as cofactor.

The protein localises to the cytoplasm. It catalyses the reaction 2 D-alanine + ATP = D-alanyl-D-alanine + ADP + phosphate + H(+). It participates in cell wall biogenesis; peptidoglycan biosynthesis. Functionally, cell wall formation. This is D-alanine--D-alanine ligase from Methylacidiphilum infernorum (isolate V4) (Methylokorus infernorum (strain V4)).